Here is a 163-residue protein sequence, read N- to C-terminus: NADPH-dependent 7-cyano-7-deazaguanine reductase (163 aa).

Cys54 (thioimide intermediate) is an active-site residue. Asp61 acts as the Proton donor in catalysis. Substrate contacts are provided by residues 76-78 (VES) and 95-96 (HE).

Belongs to the GTP cyclohydrolase I family. QueF type 1 subfamily.

The protein localises to the cytoplasm. It catalyses the reaction 7-aminomethyl-7-carbaguanine + 2 NADP(+) = 7-cyano-7-deazaguanine + 2 NADPH + 3 H(+). It functions in the pathway tRNA modification; tRNA-queuosine biosynthesis. Catalyzes the NADPH-dependent reduction of 7-cyano-7-deazaguanine (preQ0) to 7-aminomethyl-7-deazaguanine (preQ1). The chain is NADPH-dependent 7-cyano-7-deazaguanine reductase from Streptococcus thermophilus (strain CNRZ 1066).